Reading from the N-terminus, the 375-residue chain is 4-hydroxy-3-methylbut-2-en-1-yl diphosphate synthase (flavodoxin) (375 aa).

C275, C278, C310, and E317 together coordinate [4Fe-4S] cluster.

Belongs to the IspG family. [4Fe-4S] cluster serves as cofactor.

The catalysed reaction is (2E)-4-hydroxy-3-methylbut-2-enyl diphosphate + oxidized [flavodoxin] + H2O + 2 H(+) = 2-C-methyl-D-erythritol 2,4-cyclic diphosphate + reduced [flavodoxin]. It functions in the pathway isoprenoid biosynthesis; isopentenyl diphosphate biosynthesis via DXP pathway; isopentenyl diphosphate from 1-deoxy-D-xylulose 5-phosphate: step 5/6. Converts 2C-methyl-D-erythritol 2,4-cyclodiphosphate (ME-2,4cPP) into 1-hydroxy-2-methyl-2-(E)-butenyl 4-diphosphate. The polypeptide is 4-hydroxy-3-methylbut-2-en-1-yl diphosphate synthase (flavodoxin) (Ruegeria pomeroyi (strain ATCC 700808 / DSM 15171 / DSS-3) (Silicibacter pomeroyi)).